The chain runs to 156 residues: D-aminoacyl-tRNA deacylase (156 aa).

The Gly-cisPro motif, important for rejection of L-amino acids motif lies at 142-143; the sequence is GP.

The protein belongs to the DTD family. As to quaternary structure, homodimer.

It is found in the cytoplasm. The catalysed reaction is glycyl-tRNA(Ala) + H2O = tRNA(Ala) + glycine + H(+). It catalyses the reaction a D-aminoacyl-tRNA + H2O = a tRNA + a D-alpha-amino acid + H(+). In terms of biological role, an aminoacyl-tRNA editing enzyme that deacylates mischarged D-aminoacyl-tRNAs. Also deacylates mischarged glycyl-tRNA(Ala), protecting cells against glycine mischarging by AlaRS. Acts via tRNA-based rather than protein-based catalysis; rejects L-amino acids rather than detecting D-amino acids in the active site. By recycling D-aminoacyl-tRNA to D-amino acids and free tRNA molecules, this enzyme counteracts the toxicity associated with the formation of D-aminoacyl-tRNA entities in vivo and helps enforce protein L-homochirality. This Delftia acidovorans (strain DSM 14801 / SPH-1) protein is D-aminoacyl-tRNA deacylase.